Here is a 252-residue protein sequence, read N- to C-terminus: 3-dehydroquinate dehydratase (252 aa).

Residues 46–48 (EWR) and Arg-82 each bind 3-dehydroquinate. The active-site Proton donor/acceptor is His-143. The active-site Schiff-base intermediate with substrate is the Lys-170. Positions 212, 231, and 235 each coordinate 3-dehydroquinate.

Belongs to the type-I 3-dehydroquinase family. Homodimer.

The catalysed reaction is 3-dehydroquinate = 3-dehydroshikimate + H2O. It functions in the pathway metabolic intermediate biosynthesis; chorismate biosynthesis; chorismate from D-erythrose 4-phosphate and phosphoenolpyruvate: step 3/7. In terms of biological role, involved in the third step of the chorismate pathway, which leads to the biosynthesis of aromatic amino acids. Catalyzes the cis-dehydration of 3-dehydroquinate (DHQ) and introduces the first double bond of the aromatic ring to yield 3-dehydroshikimate. This chain is 3-dehydroquinate dehydratase, found in Listeria innocua serovar 6a (strain ATCC BAA-680 / CLIP 11262).